The sequence spans 184 residues: GMP synthase [glutamine-hydrolyzing] subunit A (184 aa).

Residues 3-184 (HIAVIDNHGQ…VFKNFIARCQ (182 aa)) form the Glutamine amidotransferase type-1 domain. Cysteine 75 functions as the Nucleophile in the catalytic mechanism. Catalysis depends on residues histidine 163 and glutamate 165.

As to quaternary structure, heterodimer composed of a glutamine amidotransferase subunit (A) and a GMP-binding subunit (B).

The enzyme catalyses XMP + L-glutamine + ATP + H2O = GMP + L-glutamate + AMP + diphosphate + 2 H(+). Its pathway is purine metabolism; GMP biosynthesis; GMP from XMP (L-Gln route): step 1/1. Its function is as follows. Catalyzes the synthesis of GMP from XMP. This is GMP synthase [glutamine-hydrolyzing] subunit A from Haloquadratum walsbyi (strain DSM 16790 / HBSQ001).